We begin with the raw amino-acid sequence, 428 residues long: 3-phosphoshikimate 1-carboxyvinyltransferase (428 aa).

K21, S22, and R26 together coordinate 3-phosphoshikimate. Phosphoenolpyruvate is bound at residue K21. The phosphoenolpyruvate site is built by G91 and R119. 3-phosphoshikimate contacts are provided by S164, Q166, D313, and K340. Q166 provides a ligand contact to phosphoenolpyruvate. The Proton acceptor role is filled by D313. Residues R344 and R386 each coordinate phosphoenolpyruvate.

It belongs to the EPSP synthase family. As to quaternary structure, monomer.

Its subcellular location is the cytoplasm. The catalysed reaction is 3-phosphoshikimate + phosphoenolpyruvate = 5-O-(1-carboxyvinyl)-3-phosphoshikimate + phosphate. Its pathway is metabolic intermediate biosynthesis; chorismate biosynthesis; chorismate from D-erythrose 4-phosphate and phosphoenolpyruvate: step 6/7. Catalyzes the transfer of the enolpyruvyl moiety of phosphoenolpyruvate (PEP) to the 5-hydroxyl of shikimate-3-phosphate (S3P) to produce enolpyruvyl shikimate-3-phosphate and inorganic phosphate. The sequence is that of 3-phosphoshikimate 1-carboxyvinyltransferase from Campylobacter jejuni subsp. jejuni serotype O:2 (strain ATCC 700819 / NCTC 11168).